Here is a 547-residue protein sequence, read N- to C-terminus: CTP synthase (547 aa).

Residues 1 to 273 (MNNKKLKSKF…DHFILNHFQL (273 aa)) form an amidoligase domain region. Position 19 (S19) interacts with CTP. S19 provides a ligand contact to UTP. 20–25 (SLGKGI) is a binding site for ATP. Y60 contributes to the L-glutamine binding site. Residue D77 coordinates ATP. Mg(2+)-binding residues include D77 and E147. CTP-binding positions include 154–156 (DIE), 194–199 (KTKPTQ), and K230. UTP-binding positions include 194 to 199 (KTKPTQ) and K230. The Glutamine amidotransferase type-1 domain occupies 306 to 539 (YVILHDAYLS…VEAALLKNGK (234 aa)). Position 361 (G361) interacts with L-glutamine. The active-site Nucleophile; for glutamine hydrolysis is the C388. L-glutamine-binding positions include 389–392 (FGMQ), E412, and R466. Catalysis depends on residues H512 and E514.

Belongs to the CTP synthase family. Homotetramer.

It catalyses the reaction UTP + L-glutamine + ATP + H2O = CTP + L-glutamate + ADP + phosphate + 2 H(+). The enzyme catalyses L-glutamine + H2O = L-glutamate + NH4(+). The catalysed reaction is UTP + NH4(+) + ATP = CTP + ADP + phosphate + 2 H(+). Its pathway is pyrimidine metabolism; CTP biosynthesis via de novo pathway; CTP from UDP: step 2/2. Its activity is regulated as follows. Allosterically activated by GTP, when glutamine is the substrate; GTP has no effect on the reaction when ammonia is the substrate. The allosteric effector GTP functions by stabilizing the protein conformation that binds the tetrahedral intermediate(s) formed during glutamine hydrolysis. Inhibited by the product CTP, via allosteric rather than competitive inhibition. Catalyzes the ATP-dependent amination of UTP to CTP with either L-glutamine or ammonia as the source of nitrogen. Regulates intracellular CTP levels through interactions with the four ribonucleotide triphosphates. The sequence is that of CTP synthase from Phytoplasma australiense.